The primary structure comprises 209 residues: Uridine kinase (209 aa).

Residue Gly12–Thr19 participates in ATP binding.

Belongs to the uridine kinase family.

It localises to the cytoplasm. It catalyses the reaction uridine + ATP = UMP + ADP + H(+). It carries out the reaction cytidine + ATP = CMP + ADP + H(+). Its pathway is pyrimidine metabolism; CTP biosynthesis via salvage pathway; CTP from cytidine: step 1/3. The protein operates within pyrimidine metabolism; UMP biosynthesis via salvage pathway; UMP from uridine: step 1/1. The protein is Uridine kinase of Streptococcus agalactiae serotype III (strain NEM316).